A 1413-amino-acid polypeptide reads, in one-letter code: Zinc finger SWIM domain-containing protein 8 (1413 aa).

A phosphoserine mark is found at Ser-36, Ser-48, and Ser-53. Residues 45–65 (RKQSAGPNSPTGGGGGGGSGG) are disordered. Residues 55–65 (TGGGGGGGSGG) are compositionally biased toward gly residues. The SWIM-type zinc finger occupies 172-208 (YNVAVMFDRCRVTSCSCTCGAGAKWCTHVVALCLFRI). Positions 600-817 (ESQTHKPQTL…ESHAPHVPNQ (218 aa)) are disordered. Polar residues predominate over residues 604–625 (HKPQTLSSFYSSSRPATASQRS). The span at 704–715 (SRGGYNGRGWGS) shows a compositional bias: gly residues. Thr-724 is modified (phosphothreonine). Over residues 729–744 (IDSSAPETTSDSSPTL) the composition is skewed to polar residues. Phosphoserine occurs at positions 738, 741, and 745. The segment covering 759-794 (GRGQDSDSISSSSSDSLGSSSSSGSRRASASGGARA) has biased composition (low complexity). The segment covering 795-811 (KTVEVGRYKGRRPESHA) has biased composition (basic and acidic residues). 2 positions are modified to phosphoserine: Ser-852 and Ser-1412.

The protein belongs to the ZSWIM8 family. As to quaternary structure, component of the SCF-like E3 ubiquitin-protein ligase complex which contains CUL3, RBX1, ELOB, ELOC and ZSWIM8. Interacts with DAB1.

It localises to the cytoplasm. The protein localises to the cytosol. The protein operates within protein modification; protein ubiquitination. In terms of biological role, substrate recognition component of a SCF-like E3 ubiquitin-protein ligase complex that promotes target-directed microRNA degradation (TDMD), a process that mediates degradation of microRNAs (miRNAs). The SCF-like E3 ubiquitin-protein ligase complex acts by catalyzing ubiquitination and subsequent degradation of AGO proteins (AGO1, AGO2, AGO3 and/or AGO4), thereby exposing miRNAs for degradation. Specifically recognizes and binds AGO proteins when they are engaged with a TDMD target. May also acts as a regulator of axon guidance: specifically recognizes misfolded ROBO3 and promotes its ubiquitination and subsequent degradation. Plays an essential role for proper embryonic development of heart and lung. Controls protein quality of DAB1, a key signal molecule for brain development, thus protecting its signaling strength. Mechanistically, recognizes intrinsically disordered regions of DAB1 and eliminates misfolded DAB1 that cannot be properly phosphorylated. The protein is Zinc finger SWIM domain-containing protein 8 of Bos taurus (Bovine).